A 594-amino-acid polypeptide reads, in one-letter code: Golgi-associated RAB2 interactor protein 4 (594 aa).

A disordered region spans residues Met-387–Gly-524. Polar residues predominate over residues Ser-396 to Gly-406. Basic and acidic residues-rich tracts occupy residues His-408–Leu-433, Thr-442–Ala-455, and Ala-468–Gly-477. The segment covering Ser-511–Ser-520 has biased composition (polar residues).

Belongs to the GARIN family. As to quaternary structure, interacts (via N-terminus) with RAB2B (in GTP-bound form).

Its subcellular location is the golgi apparatus. Its function is as follows. RAB2B effector protein required for the compacted Golgi morphology, probably through interaction with small GTPase RAB2B. The polypeptide is Golgi-associated RAB2 interactor protein 4 (Homo sapiens (Human)).